A 930-amino-acid chain; its full sequence is Translation initiation factor IF-2 (930 aa).

The segment covering 50-67 (FKPAAAPKVEAKPAAPKV) has biased composition (low complexity). Disordered regions lie at residues 50 to 217 (FKPA…SSEE) and 260 to 346 (EVVP…HELP). 2 stretches are compositionally biased toward basic and acidic residues: residues 68-90 (SAEK…EAKP) and 110-125 (FKAE…AERR). Over residues 129-141 (KGNNRDQQQNGNR) the composition is skewed to low complexity. Basic and acidic residues-rich tracts occupy residues 157 to 167 (RDNRRFNDQAK) and 262 to 295 (VPEK…DGPR). Residues 309-318 (NQKNSNWNNN) show a composition bias toward low complexity. Over residues 337-346 (VTERKFHELP) the composition is skewed to basic and acidic residues. The tr-type G domain maps to 432-599 (ERPPVVTIMG…TVLLVAEIQE (168 aa)). The interval 441-448 (GHVDHGKT) is G1. Position 441–448 (441–448 (GHVDHGKT)) interacts with GTP. The segment at 466 to 470 (GITQH) is G2. Residues 487 to 490 (DTPG) are G3. Residues 487-491 (DTPGH) and 541-544 (NKID) each bind GTP. The G4 stretch occupies residues 541-544 (NKID). The G5 stretch occupies residues 577-579 (SAK).

Belongs to the TRAFAC class translation factor GTPase superfamily. Classic translation factor GTPase family. IF-2 subfamily.

It is found in the cytoplasm. Functionally, one of the essential components for the initiation of protein synthesis. Protects formylmethionyl-tRNA from spontaneous hydrolysis and promotes its binding to the 30S ribosomal subunits. Also involved in the hydrolysis of GTP during the formation of the 70S ribosomal complex. This is Translation initiation factor IF-2 from Streptococcus pneumoniae (strain P1031).